We begin with the raw amino-acid sequence, 298 residues long: Ribose-phosphate pyrophosphokinase (298 aa).

Residues 33–35 (DGE) and 91–92 (RQ) each bind ATP. Positions 125 and 164 each coordinate Mg(2+). The active site involves Lys187. Positions 189 and 224 each coordinate D-ribose 5-phosphate.

It belongs to the ribose-phosphate pyrophosphokinase family. Class III (archaeal) subfamily. It depends on Mg(2+) as a cofactor.

The protein localises to the cytoplasm. The enzyme catalyses D-ribose 5-phosphate + ATP = 5-phospho-alpha-D-ribose 1-diphosphate + AMP + H(+). It functions in the pathway metabolic intermediate biosynthesis; 5-phospho-alpha-D-ribose 1-diphosphate biosynthesis; 5-phospho-alpha-D-ribose 1-diphosphate from D-ribose 5-phosphate (route I): step 1/1. In terms of biological role, involved in the biosynthesis of the central metabolite phospho-alpha-D-ribosyl-1-pyrophosphate (PRPP) via the transfer of pyrophosphoryl group from ATP to 1-hydroxyl of ribose-5-phosphate (Rib-5-P). The protein is Ribose-phosphate pyrophosphokinase of Methanobrevibacter smithii (strain ATCC 35061 / DSM 861 / OCM 144 / PS).